The primary structure comprises 127 residues: Aspartate 1-decarboxylase (127 aa).

Ser25 serves as the catalytic Schiff-base intermediate with substrate; via pyruvic acid. Position 25 is a pyruvic acid (Ser) (Ser25). Thr57 lines the substrate pocket. Tyr58 functions as the Proton donor in the catalytic mechanism. Residue 73–75 (GAA) coordinates substrate.

The protein belongs to the PanD family. Heterooctamer of four alpha and four beta subunits. Requires pyruvate as cofactor. Post-translationally, is synthesized initially as an inactive proenzyme, which is activated by self-cleavage at a specific serine bond to produce a beta-subunit with a hydroxyl group at its C-terminus and an alpha-subunit with a pyruvoyl group at its N-terminus.

The protein resides in the cytoplasm. The catalysed reaction is L-aspartate + H(+) = beta-alanine + CO2. Its pathway is cofactor biosynthesis; (R)-pantothenate biosynthesis; beta-alanine from L-aspartate: step 1/1. Its function is as follows. Catalyzes the pyruvoyl-dependent decarboxylation of aspartate to produce beta-alanine. This chain is Aspartate 1-decarboxylase, found in Vesicomyosocius okutanii subsp. Calyptogena okutanii (strain HA).